The primary structure comprises 306 residues: tRNA pseudouridine synthase B (306 aa).

D43 acts as the Nucleophile in catalysis.

Belongs to the pseudouridine synthase TruB family. Type 1 subfamily.

It carries out the reaction uridine(55) in tRNA = pseudouridine(55) in tRNA. Responsible for synthesis of pseudouridine from uracil-55 in the psi GC loop of transfer RNAs. The sequence is that of tRNA pseudouridine synthase B from Anaplasma marginale (strain St. Maries).